The sequence spans 670 residues: NAD-dependent histone deacetylase SIR2 (670 aa).

2 disordered regions span residues 1 to 157 (MTEY…EHPI) and 235 to 263 (DNDDSLPQKNSSETKNVSDTYTATYPSPS). Residues 45 to 68 (NEDVDVDADADVDADADADADAEE) show a composition bias toward acidic residues. Basic and acidic residues predominate over residues 69 to 81 (DAQKDILEETKAD). The span at 82–92 (ELDEVVDEYEE) shows a compositional bias: acidic residues. Residues 96–119 (SSNFNGTASDHVGITSSNTGSTAL) show a composition bias toward polar residues. The span at 120–142 (AASSADTNSGSGNGTGTMATNGT) shows a compositional bias: low complexity. The segment covering 239–261 (SLPQKNSSETKNVSDTYTATYPS) has biased composition (polar residues). The Deacetylase sirtuin-type domain occupies 293–583 (RLTNFHTIDD…ALVAQKCGWD (291 aa)). NAD(+) contacts are provided by residues 318 to 337 (GAGISTSLGIPDFRSSEGFY) and 400 to 403 (QNID). Residue His-420 is the Proton acceptor of the active site. Zn(2+)-binding residues include Cys-428, Cys-431, Cys-452, and Cys-455. NAD(+) is bound by residues 527-529 (GTS), 552-554 (NKD), and Cys-569. The interval 617–670 (AELEAEEEKHLPLQQSTAALTPPVSLSADSPGRSSSSSPQPPTQTDIANNQTST) is disordered. Over residues 641-654 (SLSADSPGRSSSSS) the composition is skewed to low complexity. Residues 659–670 (TQTDIANNQTST) show a composition bias toward polar residues.

The protein belongs to the sirtuin family. Class I subfamily. The cofactor is Zn(2+).

The protein localises to the nucleus. It catalyses the reaction N(6)-acetyl-L-lysyl-[protein] + NAD(+) + H2O = 2''-O-acetyl-ADP-D-ribose + nicotinamide + L-lysyl-[protein]. NAD-dependent deacetylase, which asts as a key regulator of gene expression believed to help form modified chromatin structures on the genes it regulates. It is involved in telomeric silencing and in hm mating type loci silencing. This chain is NAD-dependent histone deacetylase SIR2 (SIR2), found in Kluyveromyces lactis (strain ATCC 8585 / CBS 2359 / DSM 70799 / NBRC 1267 / NRRL Y-1140 / WM37) (Yeast).